A 299-amino-acid chain; its full sequence is Large ribosomal subunit protein uL18 (299 aa).

The protein belongs to the universal ribosomal protein uL18 family. Component of the large ribosomal subunit (LSU). Interacts with Fmr1 to form the RNA-induced silencing complex (RISC), a ribonucleoprotein (RNP) complex involved in translation regulation, other components of the complex are Rm62, RpL11, AGO2 and Dcr-1.

The protein localises to the cytoplasm. The protein resides in the nucleus. Its function is as follows. Component of the ribosome, a large ribonucleoprotein complex responsible for the synthesis of proteins in the cell. The small ribosomal subunit (SSU) binds messenger RNAs (mRNAs) and translates the encoded message by selecting cognate aminoacyl-transfer RNA (tRNA) molecules. The large subunit (LSU) contains the ribosomal catalytic site termed the peptidyl transferase center (PTC), which catalyzes the formation of peptide bonds, thereby polymerizing the amino acids delivered by tRNAs into a polypeptide chain. The nascent polypeptides leave the ribosome through a tunnel in the LSU and interact with protein factors that function in enzymatic processing, targeting, and the membrane insertion of nascent chains at the exit of the ribosomal tunnel. The protein is Large ribosomal subunit protein uL18 (RpL5) of Drosophila melanogaster (Fruit fly).